Consider the following 198-residue polypeptide: Protein GrpE (198 aa).

Residues 1–18 (MSEQEQKVEIPEVEKQEE) are compositionally biased toward basic and acidic residues. Residues 1–33 (MSEQEQKVEIPEVEKQEEVVVEETQQAEHSQEF) are disordered.

The protein belongs to the GrpE family. In terms of assembly, homodimer.

The protein localises to the cytoplasm. In terms of biological role, participates actively in the response to hyperosmotic and heat shock by preventing the aggregation of stress-denatured proteins, in association with DnaK and GrpE. It is the nucleotide exchange factor for DnaK and may function as a thermosensor. Unfolded proteins bind initially to DnaJ; upon interaction with the DnaJ-bound protein, DnaK hydrolyzes its bound ATP, resulting in the formation of a stable complex. GrpE releases ADP from DnaK; ATP binding to DnaK triggers the release of the substrate protein, thus completing the reaction cycle. Several rounds of ATP-dependent interactions between DnaJ, DnaK and GrpE are required for fully efficient folding. This Haemophilus influenzae (strain ATCC 51907 / DSM 11121 / KW20 / Rd) protein is Protein GrpE.